The chain runs to 422 residues: 5'-deoxyadenosine deaminase (422 aa).

H57 and H59 together coordinate Zn(2+). Substrate-binding residues include E86 and H178. H205 lines the Zn(2+) pocket. E208 and D294 together coordinate substrate. D294 provides a ligand contact to Zn(2+).

This sequence belongs to the metallo-dependent hydrolases superfamily. MTA/SAH deaminase family. In terms of assembly, homotetramer. Requires Zn(2+) as cofactor.

It catalyses the reaction 5'-deoxyadenosine + H2O + H(+) = 5'-deoxyinosine + NH4(+). It carries out the reaction S-adenosyl-L-homocysteine + H2O + H(+) = S-inosyl-L-homocysteine + NH4(+). The catalysed reaction is S-methyl-5'-thioadenosine + H2O + H(+) = S-methyl-5'-thioinosine + NH4(+). The enzyme catalyses adenosine + H2O + H(+) = inosine + NH4(+). Its pathway is amino-acid biosynthesis; S-adenosyl-L-methionine biosynthesis. In terms of biological role, catalyzes the deamination of three SAM-derived enzymatic products, namely 5'-deoxyadenosine, S-adenosyl-L-homocysteine, and 5'-methylthioadenosine, to produce the inosine analogs. Can also deaminate adenosine. The preferred substrate for this enzyme is 5'-deoxyadenosine, but all these substrates are efficiently deaminated. Likely functions in a S-adenosyl-L-methionine (SAM) recycling pathway from S-adenosyl-L-homocysteine (SAH) produced from SAM-dependent methylation reactions. May also be involved in the recycling of 5'-deoxyadenosine, whereupon the 5'-deoxyribose moiety of 5'-deoxyinosine is further metabolized to deoxyhexoses used for the biosynthesis of aromatic amino acids in methanogens. This chain is 5'-deoxyadenosine deaminase, found in Methanococcus maripaludis (strain DSM 14266 / JCM 13030 / NBRC 101832 / S2 / LL).